The chain runs to 267 residues: MAALVVTEPGRALLRAGTERLLRGGIQELLRPRHEGNSPGLARDFSLSQNRGTVIVERWWKVPLAGEGRKPRLHRRHRVYKLVEDTKHRPKENLELILTQSVENIGVRGDLVSVRKSLGRNALLPQGLAVYASPENKKLFEEEKSLRQEGKLEKLQTKAGEVTVKFLKSCRLEVGMKNNVKWELNPEIVARHFFKNLGVVVAPHTLKLPEEPITRWGEYWCEVTVNGLDTIRVPMSVVNFEKPKTKRYKYWLAQQTAKRMAPTSPQI.

The transit peptide at 1 to 52 directs the protein to the mitochondrion; that stretch reads MAALVVTEPGRALLRAGTERLLRGGIQELLRPRHEGNSPGLARDFSLSQNRG.

This sequence belongs to the bacterial ribosomal protein bL9 family. In terms of assembly, component of the mitochondrial ribosome large subunit (39S) which comprises a 16S rRNA and about 50 distinct proteins.

It is found in the mitochondrion. This chain is Large ribosomal subunit protein bL9m (MRPL9), found in Papio anubis (Olive baboon).